We begin with the raw amino-acid sequence, 231 residues long: Large ribosomal subunit protein uL1 (231 aa).

Belongs to the universal ribosomal protein uL1 family. Part of the 50S ribosomal subunit.

Functionally, binds directly to 23S rRNA. The L1 stalk is quite mobile in the ribosome, and is involved in E site tRNA release. In terms of biological role, protein L1 is also a translational repressor protein, it controls the translation of the L11 operon by binding to its mRNA. This Polaromonas sp. (strain JS666 / ATCC BAA-500) protein is Large ribosomal subunit protein uL1.